The chain runs to 292 residues: MMLPKEIMMPNDNPYALHRVKVLKVYSLTETEKLFLFRFEDPELAEKWTFKPGQFVQLTIPGVGEVPISICSSPMRKGFFELCIRKAGRVTTVVHRLKPGDTVLVRGPYGNGFPVDEWEGMDLLLIAAGLGTAPLRSVFLYAMDNRWKYGNITFINTARYGKDLLFYKELEAMKDLAEAENVKIIQSVTRDPNWPGLKGRPQQFIVEANTNPKNTAVAICGPPRMYKSVFEALINYGYRPENIFVTLERRMKCGIGKCGHCNVGTSTSWKYICKDGPVFTYFDIVSTPGLLD.

One can recognise an FAD-binding FR-type domain in the interval tyrosine 15–valine 115. Positions 253, 258, 261, and 273 each coordinate [2Fe-2S] cluster.

As to quaternary structure, heterotetramer of alpha, beta, gamma and delta subunits. The nickel-containing alpha and delta subunits constitute the hydrogenase activity. The beta and gamma subunits (flavin-containing dimer) constitute the sulfur reductase activity. The cofactor is FAD. [2Fe-2S] cluster is required as a cofactor.

The protein localises to the cytoplasm. The catalysed reaction is n sulfur + H2 = (n-1) sulfur + hydrogen sulfide + H(+). With respect to regulation, stimulated by rubredoxin at pH 7.6 but not ferredoxin. Part of a bifunctional enzyme complex that functions as an NADPH-dependent hydrogen-evolving hydrogenase with sulfur reducing activity. May play a role in hydrogen cycling during fermentative growth. Activity not exhibited with NAD. The beta and gamma subunits form the sulfur reducing component that catalyzes the cytoplasmic production of hydrogen sulfide in the presence of elemental sulfur. Not active in the presence of sodium sulfate, sodium sulfite, sodium thiosulfate or cysteine. The protein is Sulfhydrogenase 1 subunit gamma of Pyrococcus furiosus (strain ATCC 43587 / DSM 3638 / JCM 8422 / Vc1).